The primary structure comprises 258 residues: Axonemal dynein light intermediate polypeptide 1 (258 aa).

2 disordered regions span residues 1 to 60 (MIPP…CVPD) and 202 to 231 (DLER…EEKK). Positions 176 to 255 (MRKALQAEQG…LKAQLEGIIA (80 aa)) form a coiled coil.

The protein belongs to the inner dynein arm light chain family. In terms of assembly, interacts with CFAP45. Interacts with DYNC1H1. In terms of tissue distribution, predominantly expressed in the testis, also detected at lower levels in several tissues expressing cilia. Strongly expressed in elongating spermatid cells (at protein level).

The protein resides in the cell projection. It is found in the cilium. Its subcellular location is the flagellum. It localises to the dynein axonemal particle. The protein localises to the cytoplasm. Functionally, involved in sperm flagellum assembly. The polypeptide is Axonemal dynein light intermediate polypeptide 1 (Mus musculus (Mouse)).